Consider the following 112-residue polypeptide: Cytochrome c type-1 (112 aa).

Residues Cys20, Cys23, His24, and Met85 each contribute to the heme c site.

In terms of processing, binds 1 heme c group covalently per subunit.

The protein resides in the mitochondrion intermembrane space. Its function is as follows. Electron carrier between complex III (ubiquinol-cytochrome c oxireductase) and complex IV (cytochrome c oxidase). This is Cytochrome c type-1 from Ascaris suum (Pig roundworm).